Here is a 365-residue protein sequence, read N- to C-terminus: GDSL lipase (365 aa).

The signal sequence occupies residues 1 to 27 (MAVASRKLGALVLVAVLCLSLPTGCLS). The active-site Nucleophile is Ser40. 2 N-linked (GlcNAc...) asparagine glycosylation sites follow: Asn189 and Asn310. Residues Asp318 and His321 each act as charge relay system in the active site.

This sequence belongs to the 'GDSL' lipolytic enzyme family. As to expression, restricted to the pericarp during achene maturation. Expressed in the leaves of mature plants and seedlings, as well as in buds and flowers. Present in disk florets.

The protein localises to the secreted. It localises to the extracellular space. The catalysed reaction is (Z,S)-pyrethrolone + (1R,3R)-chrysanthemoyl-CoA = pyrethrin I + CoA. It carries out the reaction (Z,S)-pyrethrolone + (1R,3R)-pyrethroyl-CoA = pyrethrin II + CoA. The enzyme catalyses (Z,S)-jasmololone + (1R,3R)-chrysanthemoyl-CoA = jasmolin I + CoA. It catalyses the reaction (Z,S)-cinerolone + (1R,3R)-chrysanthemoyl-CoA = cinerin I + CoA. The catalysed reaction is (Z,S)-jasmololone + (1R,3R)-pyrethroyl-CoA = jasmolin II + CoA. It carries out the reaction (Z,S)-cinerolone + (1R,3R)-pyrethroyl-CoA = cinerin II + CoA. The protein operates within isoprenoid biosynthesis. Its function is as follows. Component of the monoterpenoid pyrethrins biosynthesis; pyrethrins are widely used plant-derived pesticide. Acyltransferase that catalyzes the esterification of terpene acids and lipid alcohol substrates into pyrethrins; mediates the transfer of a chrysanthemoyl moiety from the coenzyme A (CoA) thio-ester chrysanthemoyl CoA to pyrethrolone, and, to a lower extent, to jasmololone and cinerolone thus producing pyrethrins (e.g. pyrethrin type I). Can also use pyrethroyl CoA as substrate. Also has esterase activity, being able to cleave the ester bond of pyrethrin I, p-nitrophenyl butanoate and p-nitrophenyl octanoate to produce pyrethrolone and p-nitrophenol, respectively. The protein is GDSL lipase of Tanacetum cinerariifolium (Dalmatian daisy).